We begin with the raw amino-acid sequence, 63 residues long: Cytochrome c oxidase subunit 7C, mitochondrial (63 aa).

The N-terminal 16 residues, 1 to 16 (MLGQSIRRFTTSVVRR), are a transit peptide targeting the mitochondrion. Residues 17–33 (SHYEEGPGKNLPFSVEN) lie on the Mitochondrial matrix side of the membrane. Lys25 carries the N6-acetyllysine; alternate modification. At Lys25 the chain carries N6-succinyllysine; alternate. Residues 34–60 (KWSLLAKMCLYFGSAFATPFLVVRHQL) form a helical membrane-spanning segment. Topologically, residues 61 to 63 (LKT) are mitochondrial intermembrane.

The protein belongs to the cytochrome c oxidase VIIc family. As to quaternary structure, component of the cytochrome c oxidase (complex IV, CIV), a multisubunit enzyme composed of 14 subunits. The complex is composed of a catalytic core of 3 subunits MT-CO1, MT-CO2 and MT-CO3, encoded in the mitochondrial DNA, and 11 supernumerary subunits COX4I1 (or COX4I2), COX5A, COX5B, COX6A1 (or COX6A2), COX6B1 (or COX6B2), COX6C, COX7A2 (or COX7A1), COX7B, COX7C, COX8A and NDUFA4, which are encoded in the nuclear genome. The complex exists as a monomer or a dimer and forms supercomplexes (SCs) in the inner mitochondrial membrane with NADH-ubiquinone oxidoreductase (complex I, CI) and ubiquinol-cytochrome c oxidoreductase (cytochrome b-c1 complex, complex III, CIII), resulting in different assemblies (supercomplex SCI(1)III(2)IV(1) and megacomplex MCI(2)III(2)IV(2)). Interacts with RAB5IF.

It localises to the mitochondrion inner membrane. It functions in the pathway energy metabolism; oxidative phosphorylation. In terms of biological role, component of the cytochrome c oxidase, the last enzyme in the mitochondrial electron transport chain which drives oxidative phosphorylation. The respiratory chain contains 3 multisubunit complexes succinate dehydrogenase (complex II, CII), ubiquinol-cytochrome c oxidoreductase (cytochrome b-c1 complex, complex III, CIII) and cytochrome c oxidase (complex IV, CIV), that cooperate to transfer electrons derived from NADH and succinate to molecular oxygen, creating an electrochemical gradient over the inner membrane that drives transmembrane transport and the ATP synthase. Cytochrome c oxidase is the component of the respiratory chain that catalyzes the reduction of oxygen to water. Electrons originating from reduced cytochrome c in the intermembrane space (IMS) are transferred via the dinuclear copper A center (CU(A)) of subunit 2 and heme A of subunit 1 to the active site in subunit 1, a binuclear center (BNC) formed by heme A3 and copper B (CU(B)). The BNC reduces molecular oxygen to 2 water molecules using 4 electrons from cytochrome c in the IMS and 4 protons from the mitochondrial matrix. This is Cytochrome c oxidase subunit 7C, mitochondrial (COX7C) from Homo sapiens (Human).